We begin with the raw amino-acid sequence, 3130 residues long: DNA polymerase zeta catalytic subunit (3130 aa).

Disordered regions lie at residues 263-295 (AIWEDEKQRRRNRNETSQMSQPESQDHRFVPAT), 425-457 (GYRGERNRMPSPCRSFGNNKYPQNSDDEENEPQ), 487-510 (LCRNTHRSSTEDDDSSSGEEMEWS), 524-548 (LDGTADENSDNPLNNENSRTHSSVI), 697-728 (PNENTLGKNSFNFSDLNHSKNKVSSEGNEKGN), and 817-871 (VTYK…EKDN). Residues 286 to 295 (SQDHRFVPAT) are compositionally biased toward basic and acidic residues. A compositionally biased stretch (acidic residues) spans 497–509 (EDDDSSSGEEMEW). 2 stretches are compositionally biased toward polar residues: residues 533–548 (DNPLNNENSRTHSSVI) and 699–728 (ENTLGKNSFNFSDLNHSKNKVSSEGNEKGN). Residues 828–838 (SRLKLNKRKLA) are compositionally biased toward basic residues. The span at 842 to 854 (ETSTKSSETGSTK) shows a compositional bias: low complexity. Residues 855–866 (DNFIQNNPCNSN) show a composition bias toward polar residues. At serine 1030 the chain carries Phosphoserine. 3 disordered regions span residues 1035–1095 (YPIY…YNAE), 1162–1231 (SRIG…DEKI), and 1537–1600 (RQQK…KLLK). Threonine 1041 bears the Phosphothreonine mark. Composition is skewed to basic residues over residues 1043 to 1061 (KKSHRRKSKHKSAKKKTGK) and 1166 to 1179 (KTSRARAQIKKSKA). Positions 1213 to 1231 (KTNEKGTSRKHTTLKDEKI) are enriched in basic and acidic residues. Residues 1540 to 1565 (KAQNANTTQDPLSNKHQPNKNISGSL) show a composition bias toward polar residues. The span at 1570 to 1589 (ANKRTRSVTSPRKPRTPRST) shows a compositional bias: basic residues. Residues 1590–1600 (KQKEKIPKLLK) are compositionally biased toward basic and acidic residues. The residue at position 1724 (serine 1724) is a Phosphoserine. Disordered regions lie at residues 1845 to 1882 (NDMLTPTPDSSPRSTSSPSQSKNGSFTPRTANILKPLM), 1962 to 1984 (NPRPGSPLRSGQGVVNKGSSNSP), 2017 to 2050 (ERSKKLPKTKPTGVVKSAENFSSSVNPDDKPVVP), 2080 to 2150 (PTTG…SPVE), and 2216 to 2236 (APGLSPLSTEPKTQKLSNKKG). The mediates interaction with MAD2L2 stretch occupies residues 1847 to 1898 (MLTPTPDSSPRSTSSPSQSKNGSFTPRTANILKPLMSPPSREEIMATLLDHD). The span at 1849 to 1865 (TPTPDSSPRSTSSPSQS) shows a compositional bias: low complexity. Serine 1967 carries the post-translational modification Phosphoserine. The segment covering 2080-2092 (PTTGCSQTASESQ) has biased composition (polar residues). The segment covering 2113-2122 (YYISYSSPDS) has biased composition (low complexity). Residues 2221 to 2236 (PLSTEPKTQKLSNKKG) show a composition bias toward polar residues. Residues cysteine 3042, cysteine 3045, cysteine 3054, and cysteine 3057 each contribute to the Zn(2+) site. The CysA-type zinc finger occupies 3042 to 3057 (CPVCDDLTQHGICSKC). Residues cysteine 3086, cysteine 3089, cysteine 3099, and cysteine 3104 each coordinate [4Fe-4S] cluster. A CysB motif motif is present at residues 3086-3104 (CKNCTGCFDRHIPCVSLNC).

Belongs to the DNA polymerase type-B family. As to quaternary structure, heterodimer with MAD2L2. This dimer forms the minimal DNA polymerase zeta complex (Pol-zeta2), with REV3L bearing DNA polymerase catalytic activity, although its activity is very low in this context. Component of the tetrameric Pol-zeta complex (Pol-zeta4), which consists of REV3L, MAD2L2, POLD2 and POLD3; Pol-zeta4 is the fully active form of DNA polymerase zeta. [4Fe-4S] cluster serves as cofactor. As to expression, ubiquitously expressed.

It localises to the nucleus. It catalyses the reaction DNA(n) + a 2'-deoxyribonucleoside 5'-triphosphate = DNA(n+1) + diphosphate. Functionally, catalytic subunit of the DNA polymerase zeta complex, an error-prone polymerase specialized in translesion DNA synthesis (TLS). Lacks an intrinsic 3'-5' exonuclease activity and thus has no proofreading function. The polypeptide is DNA polymerase zeta catalytic subunit (REV3L) (Homo sapiens (Human)).